The chain runs to 475 residues: Ribulose bisphosphate carboxylase large chain (475 aa).

Residues 1-2 constitute a propeptide that is removed on maturation; the sequence is MV. An N-acetylproline modification is found at Pro3. At Lys14 the chain carries N6,N6,N6-trimethyllysine. Asn123 and Thr173 together coordinate substrate. The active-site Proton acceptor is Lys175. Residue Lys177 participates in substrate binding. 3 residues coordinate Mg(2+): Lys201, Asp203, and Glu204. N6-carboxylysine is present on Lys201. The active-site Proton acceptor is the His294. Substrate-binding residues include Arg295, His327, and Ser379.

The protein belongs to the RuBisCO large chain family. Type I subfamily. In terms of assembly, heterohexadecamer of 8 large chains and 8 small chains; disulfide-linked. The disulfide link is formed within the large subunit homodimers. Mg(2+) is required as a cofactor. The disulfide bond which can form in the large chain dimeric partners within the hexadecamer appears to be associated with oxidative stress and protein turnover.

It is found in the plastid. The protein localises to the chloroplast. It catalyses the reaction 2 (2R)-3-phosphoglycerate + 2 H(+) = D-ribulose 1,5-bisphosphate + CO2 + H2O. The catalysed reaction is D-ribulose 1,5-bisphosphate + O2 = 2-phosphoglycolate + (2R)-3-phosphoglycerate + 2 H(+). Its function is as follows. RuBisCO catalyzes two reactions: the carboxylation of D-ribulose 1,5-bisphosphate, the primary event in carbon dioxide fixation, as well as the oxidative fragmentation of the pentose substrate in the photorespiration process. Both reactions occur simultaneously and in competition at the same active site. This is Ribulose bisphosphate carboxylase large chain from Tetradesmus obliquus (Green alga).